Consider the following 474-residue polypeptide: Phosphomannomutase (474 aa).

The active-site Phosphoserine intermediate is serine 101. Residues serine 101, aspartate 242, aspartate 244, and aspartate 246 each coordinate Mg(2+).

It belongs to the phosphohexose mutase family. The cofactor is Mg(2+).

It catalyses the reaction alpha-D-mannose 1-phosphate = D-mannose 6-phosphate. In Sinorhizobium fredii (strain NBRC 101917 / NGR234), this protein is Phosphomannomutase (noeK).